The primary structure comprises 473 residues: Anthocyanidin-3-O-glucoside rhamnosyltransferase (473 aa).

This sequence belongs to the UDP-glycosyltransferase family. Expressed in petals, styles and anthers.

Its pathway is pigment biosynthesis; anthocyanin biosynthesis. Its function is as follows. Controls the rhamnosylation of reddish anthocyanidin-3-O-glucosides, which is the first step in a series of modifications that finally yield magenta or blue/purple coloured anthocyanins. Controls the conversion of anthocyanidin-3-O-glucosides to anthocyanidin-3-O-rutinosides. This is Anthocyanidin-3-O-glucoside rhamnosyltransferase from Petunia hybrida (Petunia).